The primary structure comprises 279 residues: Peptide deformylase 1B, chloroplastic (279 aa).

Residues C177 and H219 each contribute to the Fe cation site. E220 is an active-site residue. Position 223 (H223) interacts with Fe cation.

Belongs to the polypeptide deformylase family. Fe(2+) serves as cofactor.

The protein localises to the plastid. It localises to the chloroplast. It carries out the reaction N-terminal N-formyl-L-methionyl-[peptide] + H2O = N-terminal L-methionyl-[peptide] + formate. In terms of biological role, removes the formyl group from the N-terminal Met of newly synthesized proteins. This Solanum lycopersicum (Tomato) protein is Peptide deformylase 1B, chloroplastic (PDF1B).